Here is a 415-residue protein sequence, read N- to C-terminus: Fructose-1,6-bisphosphatase, chloroplastic (415 aa).

A chloroplast-targeting transit peptide spans 1-57; sequence MASIGPATTTAVKLRSSIFNPQSSTLSPSQQCITFTKSLHSFPTATRHNVASGVRCM. 5 residues coordinate Mg(2+): Glu135, Glu164, Asp185, Leu187, and Asp188. Substrate is bound at residue 188–191; it reads DGSS. The interval 207 to 232 is involved in light regulation; sequence SPNDECIVDSDHDDESQLSAEEQRCV. Cys231 and Cys236 are joined by a disulfide. The substrate site is built by Asn295, Tyr327, Tyr345, Tyr347, and Lys357. A Mg(2+)-binding site is contributed by Glu363.

It belongs to the FBPase class 1 family. Homotetramer. It depends on Mg(2+) as a cofactor.

The protein localises to the plastid. Its subcellular location is the chloroplast. It carries out the reaction beta-D-fructose 1,6-bisphosphate + H2O = beta-D-fructose 6-phosphate + phosphate. Its pathway is carbohydrate biosynthesis; Calvin cycle. The chain is Fructose-1,6-bisphosphatase, chloroplastic from Spinacia oleracea (Spinach).